We begin with the raw amino-acid sequence, 1258 residues long: Cohesin subunit SA-1 (1258 aa).

The disordered stretch occupies residues 1 to 59; that stretch reads MITSELPVLQDSTNETTAHSDAGSELEETEVKGKRKRGRPGRPPSTNKKPRKSPGEKSR. The segment covering 10–19 has biased composition (polar residues); sequence QDSTNETTAH. Ser24 carries the phosphoserine modification. The 86-residue stretch at 296 to 381 folds into the SCD domain; that stretch reads FVHRYRDAIA…NRFKDRIVSM (86 aa). Phosphoserine is present on residues Ser756, Ser1062, and Ser1065. The segment at 1055-1148 is disordered; the sequence is GGEDDRMSVN…EHGSEPDFLH (94 aa). The segment covering 1062 to 1075 has biased composition (low complexity); the sequence is SVNSGSSSSKTSSV. Over residues 1076 to 1087 the composition is skewed to basic residues; sequence RSKKGRPPLHRK. Ser1093 carries the phosphoserine modification. Residues 1095–1106 show a composition bias toward polar residues; the sequence is DNTWLNRTDTMI. Over residues 1137-1146 the composition is skewed to basic and acidic residues; sequence ESEHGSEPDF. Lys1161 participates in a covalent cross-link: Glycyl lysine isopeptide (Lys-Gly) (interchain with G-Cter in SUMO2).

The protein belongs to the SCC3 family. In terms of assembly, cohesin complexes are composed of a heterodimer between a SMC1 protein (SMC1A or SMC1B) and SMC3, which are attached via their hinge domain, and RAD21 which link them at their heads, and one STAG protein (STAG1, STAG2 or STAG3). In cohesin complexes, STAG1 is mutually exclusive with STAG2 and STAG3. Interacts directly with RAD21 in cohesin complex. The cohesin complex interacts with the cohesin loading complex subunits NIPBL/Scc2 (via HEAT repeats) and MAU2/Scc4. NIPBL directly contacts all members of the complex, RAD21, SMC1A/B, SMC3 and STAG1. Post-translationally, phosphorylated by PLK1. The large dissociation of cohesin from chromosome arms during prophase is partly due to its phosphorylation.

It is found in the nucleus. The protein localises to the chromosome. Component of cohesin complex, a complex required for the cohesion of sister chromatids after DNA replication. The cohesin complex apparently forms a large proteinaceous ring within which sister chromatids can be trapped. At anaphase, the complex is cleaved and dissociates from chromatin, allowing sister chromatids to segregate. The cohesin complex may also play a role in spindle pole assembly during mitosis. This is Cohesin subunit SA-1 (Stag1) from Mus musculus (Mouse).